A 180-amino-acid polypeptide reads, in one-letter code: Bifunctional protein PyrR (180 aa).

Positions 101–113 match the PRPP-binding motif; it reads VILVDDVLYTGRT.

It belongs to the purine/pyrimidine phosphoribosyltransferase family. PyrR subfamily. As to quaternary structure, homodimer and homohexamer; in equilibrium.

It carries out the reaction UMP + diphosphate = 5-phospho-alpha-D-ribose 1-diphosphate + uracil. Regulates transcriptional attenuation of the pyrimidine nucleotide (pyr) operon by binding in a uridine-dependent manner to specific sites on pyr mRNA. This disrupts an antiterminator hairpin in the RNA and favors formation of a downstream transcription terminator, leading to a reduced expression of downstream genes. In terms of biological role, also displays a weak uracil phosphoribosyltransferase activity which is not physiologically significant. In Bacillus mycoides (strain KBAB4) (Bacillus weihenstephanensis), this protein is Bifunctional protein PyrR.